Here is a 215-residue protein sequence, read N- to C-terminus: NAD(P)H-quinone oxidoreductase subunit I (215 aa).

4Fe-4S ferredoxin-type domains lie at 55–84 (GRIHYEFDKCIACEVCVRVCPINLPVVDWV) and 95–124 (RNYSIDFGVCIFCGNCVEYCPTNCLSMTEE). Cysteine 64, cysteine 67, cysteine 70, cysteine 74, cysteine 104, cysteine 107, cysteine 110, and cysteine 114 together coordinate [4Fe-4S] cluster. A disordered region spans residues 166–215 (AGEMDPHGVPNDRPRAGQLPSQVLETLAPPAKVGAKNEGQSTGTTQEGEA). The segment covering 169-180 (MDPHGVPNDRPR) has biased composition (basic and acidic residues). Polar residues predominate over residues 203 to 215 (EGQSTGTTQEGEA).

Belongs to the complex I 23 kDa subunit family. NDH-1 is composed of at least 11 different subunits. Requires [4Fe-4S] cluster as cofactor.

It is found in the cellular thylakoid membrane. The catalysed reaction is a plastoquinone + NADH + (n+1) H(+)(in) = a plastoquinol + NAD(+) + n H(+)(out). It carries out the reaction a plastoquinone + NADPH + (n+1) H(+)(in) = a plastoquinol + NADP(+) + n H(+)(out). NDH-1 shuttles electrons from an unknown electron donor, via FMN and iron-sulfur (Fe-S) centers, to quinones in the respiratory and/or the photosynthetic chain. The immediate electron acceptor for the enzyme in this species is believed to be plastoquinone. Couples the redox reaction to proton translocation, and thus conserves the redox energy in a proton gradient. In Parasynechococcus marenigrum (strain WH8102), this protein is NAD(P)H-quinone oxidoreductase subunit I.